Reading from the N-terminus, the 451-residue chain is uncharacterized protein (451 aa).

The region spanning 29–204 (LERYPDIIVF…TSMTFKAVPI (176 aa)) is the FAD-binding PCMH-type domain. Pros-8alpha-FAD histidine is present on H66.

This sequence belongs to the oxygen-dependent FAD-linked oxidoreductase family. FAD is required as a cofactor.

This is an uncharacterized protein from Bacillus subtilis (strain 168).